Reading from the N-terminus, the 286-residue chain is 2-hydroxy-6-oxo-6-phenylhexa-2,4-dienoate hydrolase (286 aa).

Residues 36 to 271 (VIMLHGGGPG…RCGHWAQWEH (236 aa)) form the AB hydrolase-1 domain. Substrate contacts are provided by residues 42-43 (GG), Asn51, Asn111, Ser180, and Arg190. His265 (proton acceptor) is an active-site residue. Trp266 contacts substrate.

Belongs to the AB hydrolase superfamily. BphD family. Homodimer.

The catalysed reaction is 2,6-dioxo-6-phenylhexa-3-enoate + H2O = 2-oxopent-4-enoate + benzoate + H(+). It functions in the pathway xenobiotic degradation; biphenyl degradation; 2-hydroxy-2,4-pentadienoate and benzoate from biphenyl: step 4/4. Its function is as follows. Catalyzes an unusual C-C bond hydrolysis of 2-hydroxy-6-oxo-6-phenylhexa-2,4-dienoic acid (HOPDA) to produce benzoic acid and 2-hydroxy-2,4-pentadienoic acid (HPD). The chain is 2-hydroxy-6-oxo-6-phenylhexa-2,4-dienoate hydrolase from Burkholderia cepacia (Pseudomonas cepacia).